The chain runs to 100 residues: Small ribosomal subunit protein bS18c (100 aa).

The segment at 81 to 100 (KQFERTESTPRTTGPRTRKK) is disordered. Low complexity predominate over residues 89–100 (TPRTTGPRTRKK).

The protein belongs to the bacterial ribosomal protein bS18 family. As to quaternary structure, part of the 30S ribosomal subunit.

It localises to the plastid. It is found in the chloroplast. In Nandina domestica (Heavenly bamboo), this protein is Small ribosomal subunit protein bS18c.